The sequence spans 500 residues: NAD(P)H-quinone oxidoreductase chain 4, chloroplastic (500 aa).

Helical transmembrane passes span 3–23 (FFPW…IILF), 37–57 (ICIC…HFQL), 87–107 (IGPI…AWPV), 113–130 (LFHF…GLFA), 134–154 (LLLF…LLSM), 167–187 (FILY…GVGL), 208–228 (ALEI…SPII), 242–262 (HYST…YGLI), 272–292 (AHSI…IYAA), 305–325 (IAYS…SIND), 330–350 (GAIL…FLAG), 364–384 (MGGI…FSMA), 386–406 (LALP…GIIT), 411–431 (LLIS…LTPI), and 462–482 (LFVS…PDFV).

Belongs to the complex I subunit 4 family.

Its subcellular location is the plastid. It is found in the chloroplast thylakoid membrane. The enzyme catalyses a plastoquinone + NADH + (n+1) H(+)(in) = a plastoquinol + NAD(+) + n H(+)(out). It carries out the reaction a plastoquinone + NADPH + (n+1) H(+)(in) = a plastoquinol + NADP(+) + n H(+)(out). In Daucus carota (Wild carrot), this protein is NAD(P)H-quinone oxidoreductase chain 4, chloroplastic.